The primary structure comprises 504 residues: GTPase Der (504 aa).

The EngA-type G 1 domain occupies 4 to 168 (PVVALVGRPN…QVLAPFAEKM (165 aa)). GTP is bound by residues 10-17 (GRPNVGKS), 57-61 (DTGGI), and 120-123 (NKTD). Positions 168-179 (MENADENDRTSE) are enriched in basic and acidic residues. The interval 168–191 (MENADENDRTSEEEQDEWEQEFDF) is disordered. Residues 180–191 (EEQDEWEQEFDF) are compositionally biased toward acidic residues. In terms of domain architecture, EngA-type G 2 spans 216–389 (IKIAIVGRPN…SIKEAYACAT (174 aa)). GTP-binding positions include 222–229 (GRPNVGKS), 269–273 (DTAGV), and 334–337 (NKWD). The KH-like domain occupies 390 to 474 (QKMTTSLLTR…PIRLLFQEGS (85 aa)).

The protein belongs to the TRAFAC class TrmE-Era-EngA-EngB-Septin-like GTPase superfamily. EngA (Der) GTPase family. As to quaternary structure, associates with the 50S ribosomal subunit.

GTPase that plays an essential role in the late steps of ribosome biogenesis. This Haemophilus influenzae (strain ATCC 51907 / DSM 11121 / KW20 / Rd) protein is GTPase Der.